Consider the following 312-residue polypeptide: Cytoplasmic dynein intermediate light chain DYN3 (312 aa).

This sequence belongs to the dynein light intermediate chain DYN3 family. As to quaternary structure, the dynein complex consists of at least two heavy chains and a number of intermediate and light chains. Interacts with DYN1.

It is found in the cytoplasm. Its subcellular location is the cytoskeleton. Component of the cytoplasmic dynein which acts as a motor for the intracellular retrograde motility of vesicles and organelles along microtubules. May play an important role in the proper orientation of the mitotic spindle into the budding daughter cell yeast. Probably required for normal progression of the cell cycle. The sequence is that of Cytoplasmic dynein intermediate light chain DYN3 (DYN3) from Saccharomyces cerevisiae (strain ATCC 204508 / S288c) (Baker's yeast).